Consider the following 147-residue polypeptide: uncharacterized protein (147 aa).

Residues 110-133 form a disordered region; the sequence is VLEPPTPSQPAPTPEPAVKPQPIA. Pro residues predominate over residues 113–128; that stretch reads PPTPSQPAPTPEPAVK.

This is an uncharacterized protein from Ictalurid herpesvirus 1 (strain Auburn) (IcHV-1).